Reading from the N-terminus, the 64-residue chain is Ferredoxin-2 (64 aa).

4Fe-4S ferredoxin-type domains lie at lysine 3–alanine 31 and tyrosine 34–glutamate 64. Positions 12, 15, 18, and 54 each coordinate [4Fe-4S] cluster.

Homodimer. It depends on [4Fe-4S] cluster as a cofactor.

In terms of biological role, ferredoxins are iron-sulfur proteins that transfer electrons in a wide variety of metabolic reactions. The protein is Ferredoxin-2 of Nitratidesulfovibrio vulgaris (strain DSM 19637 / Miyazaki F) (Desulfovibrio vulgaris).